The chain runs to 224 residues: UPF0758 protein Lm4b_01560 (224 aa).

The MPN domain occupies 102–224 (VVRCPEDAVK…YISLKEKGYF (123 aa)). Residues histidine 173, histidine 175, and aspartate 186 each contribute to the Zn(2+) site. Residues 173–186 (HNHPSGDPTPSSED) carry the JAMM motif motif.

It belongs to the UPF0758 family.

The polypeptide is UPF0758 protein Lm4b_01560 (Listeria monocytogenes serotype 4b (strain CLIP80459)).